Reading from the N-terminus, the 67-residue chain is Major cold shock protein (67 aa).

A CSD domain is found at 4–63; it reads GTVKWFNAEKGFGFISTENGQDVFAHFSAIQTSGFKTLEEGQKVAFDVEEGQRGPQAVNI.

Homodimer.

Its subcellular location is the cytoplasm. In Streptococcus pyogenes serotype M6 (strain ATCC BAA-946 / MGAS10394), this protein is Major cold shock protein (cspA).